Reading from the N-terminus, the 350-residue chain is GTPase Obg (350 aa).

Residues 1 to 159 (MKFIDEAKIT…WELALELKVL (159 aa)) enclose the Obg domain. The interval 17–43 (GDGSASFRREKYIPKGGPDGGDGGRGG) is disordered. Positions 33–43 (GPDGGDGGRGG) are enriched in gly residues. The 175-residue stretch at 160–334 (ADVGLLGMPN…LTYAVMDYLG (175 aa)) folds into the OBG-type G domain. GTP contacts are provided by residues 166–173 (GMPNAGKS), 191–195 (FTTLA), 213–216 (DIPG), 284–287 (NKLD), and 315–317 (SAL). Mg(2+)-binding residues include S173 and T193.

This sequence belongs to the TRAFAC class OBG-HflX-like GTPase superfamily. OBG GTPase family. In terms of assembly, monomer. The cofactor is Mg(2+).

Its subcellular location is the cytoplasm. Functionally, an essential GTPase which binds GTP, GDP and possibly (p)ppGpp with moderate affinity, with high nucleotide exchange rates and a fairly low GTP hydrolysis rate. Plays a role in control of the cell cycle, stress response, ribosome biogenesis and in those bacteria that undergo differentiation, in morphogenesis control. This chain is GTPase Obg, found in Thiobacillus denitrificans (strain ATCC 25259 / T1).